The following is a 253-amino-acid chain: A-type ATP synthase subunit B (253 aa).

It belongs to the ATPase alpha/beta chains family. As to quaternary structure, has multiple subunits with at least A(3), B(3), C, D, E, F, H, I and proteolipid K(x).

The protein localises to the cell membrane. Functionally, component of the A-type ATP synthase that produces ATP from ADP in the presence of a proton gradient across the membrane. The B chain is a regulatory subunit. This is A-type ATP synthase subunit B from Methanothermococcus thermolithotrophicus (Methanococcus thermolithotrophicus).